Consider the following 696-residue polypeptide: Translation factor waclaw, mitochondrial (696 aa).

The N-terminal 76 residues, 1 to 76 (MIVGYSVFFH…RNLSTTNQVK (76 aa)), are a transit peptide targeting the mitochondrion. One can recognise a tr-type G domain in the interval 97-278 (ERIRNFSIIA…RVIETVPPPQ (182 aa)). GTP contacts are provided by residues 106–113 (AHVDHGKS), 171–175 (DTPGH), and 225–228 (NKID).

It belongs to the TRAFAC class translation factor GTPase superfamily. Classic translation factor GTPase family. LepA subfamily.

The protein resides in the mitochondrion inner membrane. The enzyme catalyses GTP + H2O = GDP + phosphate + H(+). Promotes mitochondrial protein synthesis. May act as a fidelity factor of the translation reaction, by catalyzing a one-codon backward translocation of tRNAs on improperly translocated ribosomes. Binds to mitochondrial ribosomes in a GTP-dependent manner. The sequence is that of Translation factor waclaw, mitochondrial from Drosophila melanogaster (Fruit fly).